Here is a 172-residue protein sequence, read N- to C-terminus: Ribosome maturation factor RimM (172 aa).

Positions 95–168 (DEGEFYYHQI…RVDVAIMEGL (74 aa)) constitute a PRC barrel domain.

It belongs to the RimM family. In terms of assembly, binds ribosomal protein uS19.

Its subcellular location is the cytoplasm. In terms of biological role, an accessory protein needed during the final step in the assembly of 30S ribosomal subunit, possibly for assembly of the head region. Essential for efficient processing of 16S rRNA. May be needed both before and after RbfA during the maturation of 16S rRNA. It has affinity for free ribosomal 30S subunits but not for 70S ribosomes. The sequence is that of Ribosome maturation factor RimM from Streptococcus uberis (strain ATCC BAA-854 / 0140J).